The primary structure comprises 151 residues: 3-dehydroquinate dehydratase 1 (151 aa).

The Proton acceptor role is filled by tyrosine 24. Positions 75, 81, and 88 each coordinate substrate. The active-site Proton donor is the histidine 101. Substrate contacts are provided by residues 102 to 103 (IS) and arginine 112.

This sequence belongs to the type-II 3-dehydroquinase family. In terms of assembly, homododecamer.

The catalysed reaction is 3-dehydroquinate = 3-dehydroshikimate + H2O. It functions in the pathway metabolic intermediate biosynthesis; chorismate biosynthesis; chorismate from D-erythrose 4-phosphate and phosphoenolpyruvate: step 3/7. Functionally, catalyzes a trans-dehydration via an enolate intermediate. This Corynebacterium efficiens (strain DSM 44549 / YS-314 / AJ 12310 / JCM 11189 / NBRC 100395) protein is 3-dehydroquinate dehydratase 1 (aroQ1).